Here is a 396-residue protein sequence, read N- to C-terminus: Putative 2-hydroxyacid dehydrogenase YPL113C (396 aa).

Residues 227 to 228 (SI), 311 to 313 (VGR), and Asp337 contribute to the NAD(+) site. Residue Arg313 is part of the active site. Residue Glu342 is part of the active site. Catalysis depends on His361, which acts as the Proton donor. 361–364 (HIGS) is an NAD(+) binding site.

This sequence belongs to the D-isomer specific 2-hydroxyacid dehydrogenase family.

Its function is as follows. Putative 2-hydroxyacid dehydrogenase. The sequence is that of Putative 2-hydroxyacid dehydrogenase YPL113C from Saccharomyces cerevisiae (strain ATCC 204508 / S288c) (Baker's yeast).